Here is a 492-residue protein sequence, read N- to C-terminus: Amphoterin-induced protein 1 (492 aa).

An N-terminal signal peptide occupies residues 1–27 (MQPQRDLRGLWLLLLSVFLLLFEVARA). The 34-residue stretch at 28 to 61 (GRSVVSCPANCLCASNILSCSKQQLPNVPQSLPS) folds into the LRRNT domain. Residues 28–371 (GRSVVSCPAN…LHGHHDTLNT (344 aa)) lie on the Extracellular side of the membrane. Disulfide bonds link Cys34–Cys40 and Cys38–Cys47. LRR repeat units lie at residues 62–83 (YTAL…WTPT), 87–108 (NLHS…AFVP), 111–132 (NLRY…LFSD), 135–156 (ALEV…AFED), 159–180 (QLQK…LIKD), and 186–206 (KLML…TDLQ). Asn72 carries an N-linked (GlcNAc...) asparagine glycan. The region spanning 208-272 (LPAWVKNGLY…FSLDFFNCSE (65 aa)) is the LRRCT domain. 3 cysteine pairs are disulfide-bonded: Cys225–Cys253, Cys227–Cys270, and Cys290–Cys340. 4 N-linked (GlcNAc...) asparagine glycosylation sites follow: Asn269, Asn315, Asn348, and Asn359. In terms of domain architecture, Ig-like C2-type spans 269–352 (NCSEYKESAW…MGETFNETLS (84 aa)). Residues 372–392 (AYTTLVGCILSVVLVLIYLYL) form a helical membrane-spanning segment. The Cytoplasmic segment spans residues 393-492 (TPCRCWCRGV…SVFSDTPIVV (100 aa)). Residues 404-492 (KPSSHQGDSL…SVFSDTPIVV (89 aa)) form a disordered region. A compositionally biased stretch (polar residues) spans 407–423 (SHQGDSLSSSMLSTTPN). Positions 430–441 (GDKDDGFDRRVA) are enriched in basic and acidic residues. Residues Ser476 and Ser480 each carry the phosphoserine modification.

This sequence belongs to the immunoglobulin superfamily. AMIGO family. As to quaternary structure, homodimer, and heterodimer with AMIGO2 and AMIGO3. Interacts with KCNB1. As to expression, expressed in hippocampal and cortical neurons (at protein level). High levels in cerebellum, cerebrum, and retina. Low levels in liver, kidney, small intestine, spleen, lung and heart.

The protein resides in the cell membrane. Its subcellular location is the perikaryon. The protein localises to the cell projection. It localises to the dendrite. Its function is as follows. Promotes growth and fasciculation of neurites from cultured hippocampal neurons. May be involved in fasciculation as well as myelination of developing neural axons. May have a role in regeneration as well as neural plasticity in the adult nervous system. May mediate homophilic as well as heterophilic cell-cell interaction and contribute to signal transduction through its intracellular domain. Assembled with KCNB1 modulates the gating characteristics of the delayed rectifier voltage-dependent potassium channel KCNB1. This is Amphoterin-induced protein 1 from Mus musculus (Mouse).